We begin with the raw amino-acid sequence, 151 residues long: Acidic phospholipase A2 4 (151 aa).

Positions 1–27 are cleaved as a signal peptide; it reads MYPAHLLVLLAVCVSLLGAASIPARPL. 7 disulfides stabilise this stretch: Cys-38–Cys-104, Cys-54–Cys-151, Cys-56–Cys-72, Cys-71–Cys-132, Cys-78–Cys-125, Cys-88–Cys-118, and Cys-111–Cys-123. Residues Tyr-55, Gly-57, and Gly-59 each contribute to the Ca(2+) site. Residue His-75 is part of the active site. A Ca(2+)-binding site is contributed by Asp-76. The active site involves Asp-126.

The protein belongs to the phospholipase A2 family. Group I subfamily. D49 sub-subfamily. Ca(2+) is required as a cofactor. As to expression, expressed by the venom gland.

It is found in the secreted. The enzyme catalyses a 1,2-diacyl-sn-glycero-3-phosphocholine + H2O = a 1-acyl-sn-glycero-3-phosphocholine + a fatty acid + H(+). Its function is as follows. PLA2 catalyzes the calcium-dependent hydrolysis of the 2-acyl groups in 3-sn-phosphoglycerides. This is Acidic phospholipase A2 4 from Tropidechis carinatus (Australian rough-scaled snake).